A 606-amino-acid chain; its full sequence is MESIAAATFTPSRLAARPATPAAAAAPVRARAAVAAGGRRRTSRRGGVRCSAGKPEASAVINGSAAARAAEEDRRRFFEAAERGSGKGNLVPMWECIVSDHLTPVLAYRCLVPEDNMETPSFLFESVEQGPEGTTNVGRYSMVGAHPVMEVVAKEHKVTIMDHEKGKVTEQVVDDPMQIPRSMMEGWHPQQIDQLPDSFTGGWVGFFSYDTVRYVEKKKLPFSGAPQDDRNLPDVHLGLYDDVLVFDNVEKKVYVIHWVNLDRHATTEDAFQDGKSRLNLLLSKVHNSNVPKLSPGFVKLHTRQFGTPLNKSTMTSDEYKNAVMQAKEHIMAGDIFQIVLSQRFERRTYANPFEVYRALRIVNPSPYMAYVQARGCVLVASSPEILTRVRKGKIINRPLAGTVRRGKTEKEDEMQEQQLLSDEKQCAEHIMLVDLGRNDVGKVSKPGSVKVEKLMNIERYSHVMHISSTVSGELDDHLQSWDALRAALPVGTVSGAPKVKAMELIDELEVTRRGPYSGGLGGISFDGDMLIALALRTIVFSTAPSHNTMYSYKDTERRREWVAHLQAGAGIVADSSPDDEQRECENKAAALARAIDLAESAFVDKE.

A chloroplast-targeting transit peptide spans 1-49 (MESIAAATFTPSRLAARPATPAAAAAPVRARAAVAAGGRRRTSRRGGVR).

It belongs to the anthranilate synthase component I family. As to quaternary structure, heterotetramer consisting of two non-identical subunits: a beta subunit and a large alpha subunit.

Its subcellular location is the plastid. The protein localises to the chloroplast. The catalysed reaction is chorismate + L-glutamine = anthranilate + pyruvate + L-glutamate + H(+). The protein operates within amino-acid biosynthesis; L-tryptophan biosynthesis; L-tryptophan from chorismate: step 1/5. With respect to regulation, feedback inhibition by tryptophan. Part of a heterotetrameric complex that catalyzes the two-step biosynthesis of anthranilate, an intermediate in the biosynthesis of L-tryptophan. In the first step, the glutamine-binding beta subunit of anthranilate synthase (AS) provides the glutamine amidotransferase activity which generates ammonia as a substrate that, along with chorismate, is used in the second step, catalyzed by the large alpha subunit of AS to produce anthranilate. This chain is Anthranilate synthase alpha subunit 2, chloroplastic, found in Oryza sativa subsp. japonica (Rice).